The primary structure comprises 406 residues: MASKKIKVDEVPKLSVKEKEIEEKSSSSSSSSSSSSSSSSSSSSSSSSSGESSSSSSSSSSSSSSDSSDSSDSESSSSSSSSSSSSSSSSDSESSSESDSSSSGSSSSSSSSSDESSSESESEDETKKRARESDNEDAKETKKAKTEPESSSSSESSSSGSSSSSESESGSESDSDSSSSSSSSSDSESDSESDSQSSSSSSSSDSSSDSDSSSSDSSSDSDSSSSSSSSSSDSDSDSDSSSDSDSSGSSDSSSSSDSSSDESTSSDSSDSDSDSDSGSSSELETKEATADESKAEETPASSNESTPSASSSSSANKLNIPAGTDEIKEGQRKHFSRVDRSKINFEAWELTDNTYKGAAGTWGEKANEKLGRVRGKDFTKNKNKMKRGSYRGGSITLESGSYKFQD.

Basic and acidic residues predominate over residues 1–25; that stretch reads MASKKIKVDEVPKLSVKEKEIEEKS. Positions 1-335 are disordered; it reads MASKKIKVDE…EIKEGQRKHF (335 aa). Positions 26–115 are enriched in low complexity; the sequence is SSSSSSSSSS…SSSSSSSSDE (90 aa). A compositionally biased stretch (basic and acidic residues) spans 125–148; it reads ETKKRARESDNEDAKETKKAKTEP. At Ser-133 the chain carries Phosphoserine. Low complexity-rich tracts occupy residues 149 to 168, 176 to 186, 194 to 233, and 243 to 268; these read ESSS…SESE, DSSSSSSSSSD, DSQS…SSSD, and DSDS…SSDS. The span at 283-297 shows a compositional bias: basic and acidic residues; it reads LETKEATADESKAEE. Phosphothreonine is present on Thr-289. A Phosphoserine modification is found at Ser-293. Over residues 298–316 the composition is skewed to low complexity; it reads TPASSNESTPSASSSSSAN. The span at 325–335 shows a compositional bias: basic and acidic residues; that stretch reads DEIKEGQRKHF. Ser-394 carries the phosphoserine modification.

In terms of processing, pyrophosphorylated by 5-diphosphoinositol pentakisphosphate (5-IP7). Serine pyrophosphorylation is achieved by Mg(2+)-dependent, but enzyme independent transfer of a beta-phosphate from a inositol pyrophosphate to a pre-phosphorylated serine residue.

In terms of biological role, not known; weak suppressor of a mutant of the subunit AC40 of DNA dependent RNA polymerase I and III. The sequence is that of Suppressor protein SRP40 (SRP40) from Saccharomyces cerevisiae (strain ATCC 204508 / S288c) (Baker's yeast).